Here is a 74-residue protein sequence, read N- to C-terminus: UPF0346 protein PEPE_1063 (74 aa).

It belongs to the UPF0346 family.

This Pediococcus pentosaceus (strain ATCC 25745 / CCUG 21536 / LMG 10740 / 183-1w) protein is UPF0346 protein PEPE_1063.